Here is a 214-residue protein sequence, read N- to C-terminus: rRNA N(6)-adenosine-methyltransferase metl-5 (214 aa).

Residues Gln25, Thr28, Gly55, Cys58, Asp78, and 106 to 107 (DI) contribute to the S-adenosyl-L-methionine site.

The protein belongs to the methyltransferase superfamily. PrmA family. Heterodimer; heterodimerizes with TRMT112/C04H5.1.

The enzyme catalyses adenosine in rRNA + S-adenosyl-L-methionine = N(6)-methyladenosine in rRNA + S-adenosyl-L-homocysteine + H(+). Functionally, catalytic subunit of a heterodimer with TRMT112/C04H5.1, which specifically methylates the 6th position of adenine in position 1717 of 18S rRNA. The protein is rRNA N(6)-adenosine-methyltransferase metl-5 of Caenorhabditis elegans.